The sequence spans 255 residues: Folate receptor alpha (255 aa).

The first 24 residues, 1 to 24, serve as a signal peptide directing secretion; it reads MAHLMTVQLLLLVMWMAECAQSRA. 8 disulfides stabilise this stretch: C35–C63, C55–C103, C64–C107, C87–C173, C94–C144, C133–C207, C137–C187, and C150–C167. The N-linked (GlcNAc...) asparagine glycan is linked to N67. Residues D101, Y105, 122–126, 155–160, and S194 contribute to the folate site; these read WRKER and HKGWNW. N-linked (GlcNAc...) asparagine glycosylation is present at N159. N-linked (GlcNAc...) asparagine glycosylation occurs at N199. A lipid anchor (GPI-anchor amidated serine) is attached at S232. Residues 233 to 255 constitute a propeptide, removed in mature form; that stretch reads GAGFHGTWPLLCSLSLVLLWVIS.

Belongs to the folate receptor family. In terms of processing, the secreted form is derived from the membrane-bound form either by cleavage of the GPI anchor, or/and by proteolysis catalyzed by a metalloprotease. As to expression, detected in kidney proximal tubules (at protein level).

Its subcellular location is the cell membrane. It localises to the apical cell membrane. It is found in the basolateral cell membrane. The protein resides in the secreted. The protein localises to the cytoplasmic vesicle. Its subcellular location is the clathrin-coated vesicle. It localises to the endosome. Functionally, binds to folate and reduced folic acid derivatives and mediates delivery of 5-methyltetrahydrofolate and folate analogs into the interior of cells. Has high affinity for folate and folic acid analogs at neutral pH. Exposure to slightly acidic pH after receptor endocytosis triggers a conformation change that strongly reduces its affinity for folates and mediates their release. Required for normal embryonic development and normal cell proliferation. Required for renal folate reabsorption. The protein is Folate receptor alpha (Folr1) of Mus musculus (Mouse).